The sequence spans 188 residues: Peptidyl-tRNA hydrolase (188 aa).

Tyrosine 18 contributes to the tRNA binding site. Residue histidine 23 is the Proton acceptor of the active site. Positions 67, 69, and 115 each coordinate tRNA.

The protein belongs to the PTH family. As to quaternary structure, monomer.

Its subcellular location is the cytoplasm. The catalysed reaction is an N-acyl-L-alpha-aminoacyl-tRNA + H2O = an N-acyl-L-amino acid + a tRNA + H(+). Functionally, hydrolyzes ribosome-free peptidyl-tRNAs (with 1 or more amino acids incorporated), which drop off the ribosome during protein synthesis, or as a result of ribosome stalling. Catalyzes the release of premature peptidyl moieties from peptidyl-tRNA molecules trapped in stalled 50S ribosomal subunits, and thus maintains levels of free tRNAs and 50S ribosomes. This is Peptidyl-tRNA hydrolase from Salinibacter ruber (strain DSM 13855 / M31).